The sequence spans 360 residues: Methylthioribose-1-phosphate isomerase (360 aa).

Catalysis depends on Asp252, which acts as the Proton donor.

The protein belongs to the eIF-2B alpha/beta/delta subunits family. MtnA subfamily.

The protein resides in the cytoplasm. It localises to the nucleus. The enzyme catalyses 5-(methylsulfanyl)-alpha-D-ribose 1-phosphate = 5-(methylsulfanyl)-D-ribulose 1-phosphate. It functions in the pathway amino-acid biosynthesis; L-methionine biosynthesis via salvage pathway; L-methionine from S-methyl-5-thio-alpha-D-ribose 1-phosphate: step 1/6. Its function is as follows. Catalyzes the interconversion of methylthioribose-1-phosphate (MTR-1-P) into methylthioribulose-1-phosphate (MTRu-1-P). The polypeptide is Methylthioribose-1-phosphate isomerase (Trichoplax adhaerens (Trichoplax reptans)).